Consider the following 886-residue polypeptide: Neurotrophin 1 (886 aa).

Positions 1–29 (MKAGRAFGCLFWALLYCVLYLDLVSGNSA) are cleaved as a signal peptide. The propeptide occupies 30 to 498 (DDELMDFDFA…FDDFSLSKKR (469 aa)). N-linked (GlcNAc...) asparagine glycosylation is found at asparagine 267 and asparagine 317. Residues 321–340 (FQQPSSQEEEKMASSNGGQS) form a disordered region. Residue asparagine 353 is glycosylated (N-linked (GlcNAc...) asparagine). The segment at 369-436 (RNSAEETEEP…HKPVVTPPNK (68 aa)) is disordered. The Spaetzle domain maps to 508 to 597 (MCQSVVRYAR…KVPTCCSCQV (90 aa)). 3 disulfide bridges follow: cysteine 509–cysteine 564, cysteine 546–cysteine 593, and cysteine 553–cysteine 595. Asparagine 623 is a glycosylation site (N-linked (GlcNAc...) asparagine). Disordered stretches follow at residues 675–754 (PGIS…QYHR) and 789–886 (VSAP…QSIQ). A compositionally biased stretch (low complexity) spans 698–710 (YKSSSSSSKKYYS). A compositionally biased stretch (pro residues) spans 797–807 (PAPPLPMPPMP). Composition is skewed to basic residues over residues 815–827 (HQAHHQQPHHHLH) and 874–886 (SRRHYHNRRQSIQ).

As to quaternary structure, homodimer; disulfide-linked. Detected in the fan-shaped body which is a component of the locomotion center in the central nervous system (CNS) (at protein level). Expressed in the optic lobes and brain.

Functionally, neurotrophin which may function as a ligand for the Toll-related receptors Toll-7 and Tollo. Binds to Toll-7 and probably acts as its ligand in promoting motor axon targeting and neuronal survival in the central nervous system (CNS). Involved in synaptic targeting of ISNb/d motorneurons and also some SNa motorneurons. In larvae, involved in the negative regulation of the tracheal immune response to bacterial infection perhaps by acting as a ligand for the Toll-related receptor Tollo. May be involved in the normal development of specific neurons at the neuromuscular junction. The polypeptide is Neurotrophin 1 (Drosophila melanogaster (Fruit fly)).